Reading from the N-terminus, the 620-residue chain is Coenzyme F420-dependent sulfite reductase (620 aa).

The 4Fe-4S ferredoxin-type 1 domain occupies 6-35; the sequence is LNEIVDSGVCARCGTCTIVCPNGILTFDER. Residues Cys15, Cys18, Cys21, Cys25, Cys428, Cys434, Cys468, Cys472, Cys495, Cys498, Cys501, Cys505, Cys524, Cys527, Cys530, and Cys534 each contribute to the [4Fe-4S] cluster site. Cys472 contributes to the siroheme binding site. 2 consecutive 4Fe-4S ferredoxin-type domains span residues 486–515 and 520–544; these read KYPKVNEEKCNGCGRCAEVCKVEAIDIRGE and NYNVCVGCGKCIKNCPNEAREVKEE.

This sequence belongs to the nitrite and sulfite reductase 4Fe-4S domain family. [4Fe-4S] cluster serves as cofactor. The cofactor is siroheme.

The enzyme catalyses 3 oxidized coenzyme F420-(gamma-L-Glu)(n) + hydrogen sulfide + 3 H2O + 2 H(+) = 3 reduced coenzyme F420-(gamma-L-Glu)(n) + sulfite. Catalyzes the reduction of sulfite to sulfide using reduced F420 as the electron source. Involved in sulfite detoxification and assimilation. Cannot use NADH or NADPH. In Methanocaldococcus jannaschii (strain ATCC 43067 / DSM 2661 / JAL-1 / JCM 10045 / NBRC 100440) (Methanococcus jannaschii), this protein is Coenzyme F420-dependent sulfite reductase.